The following is a 337-amino-acid chain: MTDVLIAYGIPLAIIAAQSLALIVALLLVTAYVLLADRKIWAAVQLRRGPNVVGAFGLLQSFADLLKFVFKEIVIPAGANKGIFLLAPLVTVVLALSGWAVIPLDARMVIADINVGILYIFAISSLGVYGVIMAGWASNSKYPFLSALRAAAQMVSYEVSIGFVIVCVLMTAGSLNLTAIVESQRTIWYFIPHLPMFVIFFISALAETNRPPFDLAEAESELVAGFMVEYSSTAYMMFMLGEYVSILLMCAMTTILFLGGWLPPIDIAPFNMVPGVIWFLLKVFLVFFMFAMVKAFVPRYRYDQLMRLGWKVFLPISLFWVVLTAGVLVGFDIVPQH.

9 helical membrane passes run 9–29, 50–70, 82–102, 115–135, 161–181, 186–206, 245–265, 273–293, and 313–333; these read GIPLAIIAAQSLALIVALLLV, PNVVGAFGLLQSFADLLKFVF, GIFLLAPLVTVVLALSGWAVI, VGILYIFAISSLGVYGVIMAG, IGFVIVCVLMTAGSLNLTAIV, TIWYFIPHLPMFVIFFISALA, SILLMCAMTTILFLGGWLPPI, VPGVIWFLLKVFLVFFMFAMV, and FLPISLFWVVLTAGVLVGFDI.

This sequence belongs to the complex I subunit 1 family. NDH-1 is composed of 14 different subunits. Subunits NuoA, H, J, K, L, M, N constitute the membrane sector of the complex.

The protein localises to the cell inner membrane. It catalyses the reaction a quinone + NADH + 5 H(+)(in) = a quinol + NAD(+) + 4 H(+)(out). Its function is as follows. NDH-1 shuttles electrons from NADH, via FMN and iron-sulfur (Fe-S) centers, to quinones in the respiratory chain. The immediate electron acceptor for the enzyme in this species is believed to be ubiquinone. Couples the redox reaction to proton translocation (for every two electrons transferred, four hydrogen ions are translocated across the cytoplasmic membrane), and thus conserves the redox energy in a proton gradient. This subunit may bind ubiquinone. This chain is NADH-quinone oxidoreductase subunit H, found in Parvibaculum lavamentivorans (strain DS-1 / DSM 13023 / NCIMB 13966).